Consider the following 377-residue polypeptide: TelA-like protein SSP1345 (377 aa).

Over residues 1–18 (MAREQDSINSHPLDKYID) the composition is skewed to basic and acidic residues. The tract at residues 1–39 (MAREQDSINSHPLDKYIDENSANESEIIKSSSQFSHEDQ) is disordered. The segment covering 20–34 (NSANESEIIKSSSQF) has biased composition (polar residues).

Belongs to the TelA family.

The protein is TelA-like protein SSP1345 of Staphylococcus saprophyticus subsp. saprophyticus (strain ATCC 15305 / DSM 20229 / NCIMB 8711 / NCTC 7292 / S-41).